The following is a 249-amino-acid chain: Uridylate kinase (249 aa).

21-24 (KLSG) is a binding site for ATP. Residue G63 participates in UMP binding. ATP is bound by residues G64 and R68. Residues D84 and 145-152 (TGNPFVTT) contribute to the UMP site. ATP-binding residues include T172, Y178, and D181.

Belongs to the UMP kinase family. Homohexamer.

It localises to the cytoplasm. The catalysed reaction is UMP + ATP = UDP + ADP. The protein operates within pyrimidine metabolism; CTP biosynthesis via de novo pathway; UDP from UMP (UMPK route): step 1/1. Its activity is regulated as follows. Inhibited by UTP. Functionally, catalyzes the reversible phosphorylation of UMP to UDP. The sequence is that of Uridylate kinase from Francisella tularensis subsp. holarctica (strain FTNF002-00 / FTA).